A 287-amino-acid chain; its full sequence is Small ribosomal subunit biogenesis GTPase RsgA (287 aa).

Residues 61 to 218 (SSELIRPTVA…LVDTPGFTTL (158 aa)) form the CP-type G domain. GTP is bound by residues 110-113 (NKED) and 161-169 (GPSGAGKST). 4 residues coordinate Zn(2+): cysteine 242, cysteine 247, histidine 249, and cysteine 255.

The protein belongs to the TRAFAC class YlqF/YawG GTPase family. RsgA subfamily. In terms of assembly, monomer. Associates with 30S ribosomal subunit, binds 16S rRNA. Zn(2+) is required as a cofactor.

It localises to the cytoplasm. One of several proteins that assist in the late maturation steps of the functional core of the 30S ribosomal subunit. Helps release RbfA from mature subunits. May play a role in the assembly of ribosomal proteins into the subunit. Circularly permuted GTPase that catalyzes slow GTP hydrolysis, GTPase activity is stimulated by the 30S ribosomal subunit. This Clostridium perfringens (strain 13 / Type A) protein is Small ribosomal subunit biogenesis GTPase RsgA.